Reading from the N-terminus, the 95-residue chain is Small ribosomal subunit protein uS17 (95 aa).

The protein belongs to the universal ribosomal protein uS17 family. Part of the 30S ribosomal subunit.

One of the primary rRNA binding proteins, it binds specifically to the 5'-end of 16S ribosomal RNA. This is Small ribosomal subunit protein uS17 from Phytoplasma australiense.